Consider the following 184-residue polypeptide: Protein CPn_0803/CP_1068/CPj0803/CpB0832 (184 aa).

Belongs to the chlamydial CPn_0803/CT_584/TC_0873 family.

This Chlamydia pneumoniae (Chlamydophila pneumoniae) protein is Protein CPn_0803/CP_1068/CPj0803/CpB0832.